Consider the following 585-residue polypeptide: 1-deoxy-D-xylulose-5-phosphate synthase (585 aa).

Residues H80 and 121-123 (GHS) each bind thiamine diphosphate. D152 contacts Mg(2+). Residues 153 to 154 (GS), N181, Y259, and E334 each bind thiamine diphosphate. N181 serves as a coordination point for Mg(2+).

It belongs to the transketolase family. DXPS subfamily. Homodimer. Mg(2+) is required as a cofactor. Requires thiamine diphosphate as cofactor.

The enzyme catalyses D-glyceraldehyde 3-phosphate + pyruvate + H(+) = 1-deoxy-D-xylulose 5-phosphate + CO2. Its pathway is metabolic intermediate biosynthesis; 1-deoxy-D-xylulose 5-phosphate biosynthesis; 1-deoxy-D-xylulose 5-phosphate from D-glyceraldehyde 3-phosphate and pyruvate: step 1/1. Functionally, catalyzes the acyloin condensation reaction between C atoms 2 and 3 of pyruvate and glyceraldehyde 3-phosphate to yield 1-deoxy-D-xylulose-5-phosphate (DXP). The polypeptide is 1-deoxy-D-xylulose-5-phosphate synthase (Buchnera aphidicola subsp. Schizaphis graminum (strain Sg)).